We begin with the raw amino-acid sequence, 271 residues long: ATP synthase subunit a (271 aa).

5 consecutive transmembrane segments (helical) span residues 38–58 (FWTLNIDSMFFSVVLGLLFLA), 100–120 (LIAPLALTVFVWVFLMNLMDL), 146–166 (DVNITLSMALGVFILILFYSI), 220–240 (LIFILIAGLLPWWSQWILNVP), and 242–262 (AIFHILIITLQAFIFMVLTIV).

The protein belongs to the ATPase A chain family. F-type ATPases have 2 components, CF(1) - the catalytic core - and CF(0) - the membrane proton channel. CF(1) has five subunits: alpha(3), beta(3), gamma(1), delta(1), epsilon(1). CF(0) has three main subunits: a(1), b(2) and c(9-12). The alpha and beta chains form an alternating ring which encloses part of the gamma chain. CF(1) is attached to CF(0) by a central stalk formed by the gamma and epsilon chains, while a peripheral stalk is formed by the delta and b chains.

The protein localises to the cell inner membrane. Key component of the proton channel; it plays a direct role in the translocation of protons across the membrane. The sequence is that of ATP synthase subunit a from Enterobacter sp. (strain 638).